The chain runs to 87 residues: Defensin-like protein 176 (87 aa).

A signal peptide spans 1–23; it reads MAKATSSLVVPIIFLVIFALVEQ. 4 cysteine pairs are disulfide-bonded: Cys-27/Cys-66, Cys-36/Cys-55, Cys-39/Cys-60, and Cys-43/Cys-62.

It belongs to the DEFL family.

It localises to the secreted. In Arabidopsis thaliana (Mouse-ear cress), this protein is Defensin-like protein 176 (LCR65).